We begin with the raw amino-acid sequence, 179 residues long: Large ribosomal subunit protein uL5 (179 aa).

Belongs to the universal ribosomal protein uL5 family. In terms of assembly, part of the 50S ribosomal subunit; part of the 5S rRNA/L5/L18/L25 subcomplex. Contacts the 5S rRNA and the P site tRNA. Forms a bridge to the 30S subunit in the 70S ribosome.

In terms of biological role, this is one of the proteins that bind and probably mediate the attachment of the 5S RNA into the large ribosomal subunit, where it forms part of the central protuberance. In the 70S ribosome it contacts protein S13 of the 30S subunit (bridge B1b), connecting the 2 subunits; this bridge is implicated in subunit movement. Contacts the P site tRNA; the 5S rRNA and some of its associated proteins might help stabilize positioning of ribosome-bound tRNAs. This is Large ribosomal subunit protein uL5 from Shewanella denitrificans (strain OS217 / ATCC BAA-1090 / DSM 15013).